An 883-amino-acid polypeptide reads, in one-letter code: Phosphoenolpyruvate carboxylase (883 aa).

Residues histidine 138 and lysine 546 contribute to the active site.

This sequence belongs to the PEPCase type 1 family. The cofactor is Mg(2+).

It catalyses the reaction oxaloacetate + phosphate = phosphoenolpyruvate + hydrogencarbonate. Functionally, forms oxaloacetate, a four-carbon dicarboxylic acid source for the tricarboxylic acid cycle. This chain is Phosphoenolpyruvate carboxylase, found in Escherichia coli O127:H6 (strain E2348/69 / EPEC).